The chain runs to 124 residues: MIVGIGIDITEIDRIAKGWGRFGDRFARRILHPHEVVRMPAANPVAFLAGRFAVKEAAVKALGTGFSDGIGPRDIEVGVAPAGAPQLVLHGKAAARMEALGATRTHVSLTHGRDTAAAVVILES.

Mg(2+) contacts are provided by Asp8 and Glu56.

Belongs to the P-Pant transferase superfamily. AcpS family. Mg(2+) serves as cofactor.

The protein localises to the cytoplasm. It catalyses the reaction apo-[ACP] + CoA = holo-[ACP] + adenosine 3',5'-bisphosphate + H(+). Functionally, transfers the 4'-phosphopantetheine moiety from coenzyme A to a Ser of acyl-carrier-protein. In Nitratidesulfovibrio vulgaris (strain DP4) (Desulfovibrio vulgaris), this protein is Holo-[acyl-carrier-protein] synthase.